A 207-amino-acid chain; its full sequence is Protein GrpE (207 aa).

Positions 1-11 (MTETDGQKDNN) are enriched in basic and acidic residues. The tract at residues 1–40 (MTETDGQKDNNQDTAQAAADPVVSKPYIMPDDPEEGSNEA) is disordered.

The protein belongs to the GrpE family. Homodimer.

Its subcellular location is the cytoplasm. Participates actively in the response to hyperosmotic and heat shock by preventing the aggregation of stress-denatured proteins, in association with DnaK and GrpE. It is the nucleotide exchange factor for DnaK and may function as a thermosensor. Unfolded proteins bind initially to DnaJ; upon interaction with the DnaJ-bound protein, DnaK hydrolyzes its bound ATP, resulting in the formation of a stable complex. GrpE releases ADP from DnaK; ATP binding to DnaK triggers the release of the substrate protein, thus completing the reaction cycle. Several rounds of ATP-dependent interactions between DnaJ, DnaK and GrpE are required for fully efficient folding. The polypeptide is Protein GrpE (Rhodopseudomonas palustris (strain ATCC BAA-98 / CGA009)).